The following is a 565-amino-acid chain: NAD-dependent malic enzyme (565 aa).

The active-site Proton donor is the Tyr104. Residue Arg157 participates in NAD(+) binding. Lys175 (proton acceptor) is an active-site residue. A divalent metal cation-binding residues include Glu246, Asp247, and Asp270. Residues Asp270 and Asn418 each contribute to the NAD(+) site.

It belongs to the malic enzymes family. In terms of assembly, homotetramer. Mg(2+) serves as cofactor. It depends on Mn(2+) as a cofactor.

The enzyme catalyses (S)-malate + NAD(+) = pyruvate + CO2 + NADH. It carries out the reaction oxaloacetate + H(+) = pyruvate + CO2. The protein is NAD-dependent malic enzyme of Erwinia tasmaniensis (strain DSM 17950 / CFBP 7177 / CIP 109463 / NCPPB 4357 / Et1/99).